A 53-amino-acid chain; its full sequence is MGMSFSHLLIVLLIIFVLFGAGKLPQVMSDLAKGLKAFKEGMKDDGNDNDKNE.

A helical transmembrane segment spans residues 1–21; sequence MGMSFSHLLIVLLIIFVLFGA.

Belongs to the TatA/E family. In terms of assembly, the Tat system comprises two distinct complexes: a TatABC complex, containing multiple copies of TatA, TatB and TatC subunits, and a separate TatA complex, containing only TatA subunits. Substrates initially bind to the TatABC complex, which probably triggers association of the separate TatA complex to form the active translocon.

It is found in the cell inner membrane. Its function is as follows. Part of the twin-arginine translocation (Tat) system that transports large folded proteins containing a characteristic twin-arginine motif in their signal peptide across membranes. TatA could form the protein-conducting channel of the Tat system. This chain is Sec-independent protein translocase protein TatA, found in Rickettsia typhi (strain ATCC VR-144 / Wilmington).